The chain runs to 88 residues: Large ribosomal subunit protein bL31B (88 aa).

This sequence belongs to the bacterial ribosomal protein bL31 family. Type B subfamily. Part of the 50S ribosomal subunit.

The sequence is that of Large ribosomal subunit protein bL31B from Leuconostoc mesenteroides subsp. mesenteroides (strain ATCC 8293 / DSM 20343 / BCRC 11652 / CCM 1803 / JCM 6124 / NCDO 523 / NBRC 100496 / NCIMB 8023 / NCTC 12954 / NRRL B-1118 / 37Y).